A 580-amino-acid polypeptide reads, in one-letter code: M-phase inducer phosphatase 2 (580 aa).

Residues 1 to 24 (MEVPQPEPAPGSALSPAGVCGGAQ) are disordered. Position 42 is a phosphoserine (Ser-42). Residues 89 to 107 (SLSRRASESSLSSESSESS) show a composition bias toward low complexity. 2 disordered regions span residues 89–117 (SLSR…DSPS) and 165–196 (NITN…ENDG). Ser-169 is subject to Phosphoserine; by MELK. A Phosphoserine modification is found at Ser-249. Ser-323 carries the phosphoserine; by MELK and MAPK14 modification. Positions 331–370 (PILKRLERPQDRDTPVQNKRRRSVTPPEEQQEAEEPKARV) are disordered. Residues 334–344 (KRLERPQDRDT) are compositionally biased toward basic and acidic residues. Ser-353 bears the Phosphoserine; by AURKA mark. At Ser-375 the chain carries Phosphoserine; by BRSK1 and MAPK14. One can recognise a Rhodanese domain in the interval 431–538 (IVDKFVIVDC…FFPQHPNFCE (108 aa)). Residue Ser-470 is modified to Phosphoserine. Cys-487 is a catalytic residue. A Phosphoserine modification is found at Ser-563.

This sequence belongs to the MPI phosphatase family. As to quaternary structure, interacts with MAPK14 and 14-3-3 proteins. Post-translationally, phosphorylated by BRSK1 in vitro. Phosphorylated by CHEK1, which inhibits the activity of this protein. Phosphorylation at Ser-353 by AURKA might locally participate in the control of the onset of mitosis. Phosphorylation by MELK at Ser-169 promotes localization to the centrosome and the spindle poles during mitosis. Phosphorylation at Ser-323 and Ser-375 by MAPK14 is required for binding to 14-3-3 proteins.

It localises to the cytoplasm. The protein resides in the cytoskeleton. It is found in the microtubule organizing center. Its subcellular location is the centrosome. The protein localises to the spindle pole. It carries out the reaction O-phospho-L-tyrosyl-[protein] + H2O = L-tyrosyl-[protein] + phosphate. Its activity is regulated as follows. Stimulated by B-type cyclins. Its function is as follows. Tyrosine protein phosphatase which functions as a dosage-dependent inducer of mitotic progression. Directly dephosphorylates CDK1 and stimulates its kinase activity. Required for G2/M phases of the cell cycle progression and abscission during cytokinesis in a ECT2-dependent manner. The three isoforms seem to have a different level of activity. The polypeptide is M-phase inducer phosphatase 2 (CDC25B) (Homo sapiens (Human)).